Consider the following 3078-residue polypeptide: Homeobox-like protein HDP1 (3078 aa).

Disordered stretches follow at residues 1–29, 59–164, 203–306, 949–980, 1323–1390, 1415–1445, 1939–2046, 2115–2216, 2599–2637, and 2959–3019; these read MKRGRRKVDGDGNCPSNGMASSQRNDNSN, LHNS…INDN, SKRK…NIGK, NAEIHESNSPNHNGDKNVDPSDNVTGTKQDEN, DEDS…KDRK, SSSNYEEGNSSSNEENNISTDKNISNTNNKN, KVND…QDKF, TNES…QYNY, AYMNDNNLSNNNNDNNNDYDNDNNNNNNYSYDNKNDDNI, and QQNN…NNGP. Residues 14-29 show a composition bias toward polar residues; it reads CPSNGMASSQRNDNSN. Residues 59-84 are compositionally biased toward basic and acidic residues; it reads LHNSSSRESKDMKLSEEPRHINEKCI. 2 stretches are compositionally biased toward low complexity: residues 85-94 and 114-127; these read NDNNKINNNN and NNNNNNNKSHTKNN. Polar residues-rich tracts occupy residues 128 to 137, 148 to 157, 209 to 229, 237 to 252, and 949 to 960; these read IFFQTNNPDT, KQENTSSSLH, NSNNTMPTKKYNNTHQDNNIT, TSSIYDNTCNKNNTVH, and NAEIHESNSPNH. Basic residues predominate over residues 1368-1380; that stretch reads RKNKINRGSKGKH. Over residues 1415 to 1433 the composition is skewed to low complexity; sequence SSSNYEEGNSSSNEENNIS. A compositionally biased stretch (polar residues) spans 1434 to 1445; sequence TDKNISNTNNKN. Residues 1939–1993 show a composition bias toward low complexity; the sequence is KVNDSNNSNDANEGNNANYSNDSSNTNNNTSSSTNNSNNNTSCSSQNTTTSSENN. Composition is skewed to basic and acidic residues over residues 2012–2021 and 2029–2046; these read KDTQKEKNNL and YEDRNKNDEKNINEQDKF. The span at 2115-2126 shows a compositional bias: polar residues; the sequence is TNESIKTNSDQN. The span at 2139 to 2160 shows a compositional bias: low complexity; sequence MNNDNYNSSYDNVHNDNDNNMV. Over residues 2163–2177 the composition is skewed to basic and acidic residues; it reads DSSRQDNMEKQKSGE. Residues 2192-2201 are compositionally biased toward acidic residues; the sequence is NDNDNDDNND. Composition is skewed to low complexity over residues 2202–2216, 2602–2630, and 2959–2989; these read NDNNNNNNMNNQYNY, NDNNLSNNNNDNNNDYDNDNNNNNNYSYD, and QQNNNNNNDNINNINNMNNNNDNNNNSQKNN. Over residues 2990-3006 the composition is skewed to polar residues; it reads LSEVQVSNINTPSSYNI. Positions 2991–3078 are DNA-binding; sequence SEVQVSNINT…GKRRKNEDNK (88 aa).

Homodimer.

It localises to the nucleus. The protein resides in the chromosome. Its function is as follows. Transcriptional regulator which binds to the DNA motifs 5'-GTGCACAC-3' (motif A) and 5'-[GTA]TGTA[CT][GA]TAC-3' (motif B) of genes essential for early gametocyte development, including those critical for the expansion of the inner membrane complex (IMC). This chain is Homeobox-like protein HDP1, found in Plasmodium falciparum (isolate NF54).